A 554-amino-acid polypeptide reads, in one-letter code: MSAQISDSIEEKRGFFTRWFMSTNHKDIGVLYLFTAGLAGLISVTLTVYMRMELQHPGVQYMCLEGMRLVADAAAECTPNAHLWNVVVTYHGILMMFFVVIPALFGGFGNYFMPLHIGAPDMAFPRLNNLSYWLYVCGVSLAIASLLSPGGSDQPGAGVGWVLYPPLSTTEAGYAMDLAIFAVHVSGATSILGAINIITTFLNMRAPGMTLFKVPLFAWAVFITAWMILLSLPVLAGGITMLLMDRNFGTQFFDPAGGGDPVLYQHILWFFGHPEVYMLILPGFGIISHVISTFARKPIFGYLPMVLAMAAIAFLGFIVWAHHMYTAGMSLTQQTYFQMATMTIAVPTGIKVFSWIATMWGGSIEFKTPMLWALAFLFTVGGVTGVVIAQGSLDRVYHDTYYIVAHFHYVMSLGALFAIFAGTYYWIGKMSGRQYPEWAGQLHFWMMFIGSNLIFFPQHFLGRQGMPRRYIDYPVEFSYWNNISSIGAYISFASFLFFIGIVFYTLFAGKPVNVPNYWNEHADTLEWTLPSPPPEHTFETLPKPEDWDRAQAHR.

Residues 26 to 56 (KDIGVLYLFTAGLAGLISVTLTVYMRMELQH) form a helical membrane-spanning segment. Cysteine 63 and cysteine 77 are disulfide-bonded. Transmembrane regions (helical) follow at residues 81–118 (AHLW…LHIG), 127–148 (LNNL…SLLS), 175–203 (AMDL…TFLN), 215–248 (PLFA…DRNF), 260–295 (DPVL…STFA), and 301–319 (GYLP…GFIV). Histidine 91 is a binding site for Fe(II)-heme a. Positions 273 and 277 each coordinate Cu cation. Residues 273 to 277 (HPEVY) constitute a cross-link (1'-histidyl-3'-tyrosine (His-Tyr)). Cu cation contacts are provided by histidine 322 and histidine 323. 5 helical membrane-spanning segments follow: residues 331–359 (LTQQ…IATM), 367–390 (KTPM…VIAQ), 399–425 (DTYY…GTYY), 436–463 (PEWA…FLGR), and 478–508 (SYWN…TLFA). Histidine 406 lines the heme a3 pocket. Histidine 408 provides a ligand contact to Fe(II)-heme a.

It belongs to the heme-copper respiratory oxidase family. Cu(2+) is required as a cofactor. Heme serves as cofactor.

The protein resides in the cell inner membrane. It carries out the reaction 4 Fe(II)-[cytochrome c] + O2 + 8 H(+)(in) = 4 Fe(III)-[cytochrome c] + 2 H2O + 4 H(+)(out). It functions in the pathway energy metabolism; oxidative phosphorylation. Its function is as follows. Subunit I and II form the functional core of the enzyme complex. Electrons originating in cytochrome c are transferred via heme a and Cu(A) to the binuclear center formed by heme a3 and Cu(B). This cytochrome c oxidase shows proton pump activity across the membrane in addition to the electron transfer. The chain is Cytochrome c oxidase subunit 1-alpha (ctaDI) from Paracoccus denitrificans.